A 131-amino-acid polypeptide reads, in one-letter code: Neurophysin 2 (131 aa).

7 disulfides stabilise this stretch: Cys-10–Cys-55, Cys-13–Cys-27, Cys-21–Cys-45, Cys-28–Cys-35, Cys-62–Cys-74, Cys-68–Cys-86, and Cys-75–Cys-80.

Belongs to the vasopressin/oxytocin family.

It localises to the secreted. Neurophysin 2 specifically binds vasopressin. This chain is Neurophysin 2, found in Anser anser anser (Western greylag goose).